The primary structure comprises 433 residues: Homoserine dehydrogenase (433 aa).

3 residues coordinate NADPH: Thr12, Val13, and Lys102. Val13 serves as a coordination point for NAD(+). Residues Val13 and Lys102 each coordinate NADP(+). 4 residues coordinate Na(+): Glu126, Val129, Gly131, and Ile133. Residues Gly184 and Glu187 each contribute to the NADP(+) site. Positions 187 and 198 each coordinate L-homoserine. Lys202 functions as the Proton donor in the catalytic mechanism. Gly303 contacts NADPH. Gly303 contributes to the NAD(+) binding site. Gly303 is an NADP(+) binding site. The ACT domain maps to 356-433 (YCRFLCADVP…EIPSVIRVLS (78 aa)).

Belongs to the homoserine dehydrogenase family. Requires a metal cation as cofactor.

It carries out the reaction L-homoserine + NADP(+) = L-aspartate 4-semialdehyde + NADPH + H(+). It catalyses the reaction L-homoserine + NAD(+) = L-aspartate 4-semialdehyde + NADH + H(+). It functions in the pathway amino-acid biosynthesis; L-methionine biosynthesis via de novo pathway; L-homoserine from L-aspartate: step 3/3. It participates in amino-acid biosynthesis; L-threonine biosynthesis; L-threonine from L-aspartate: step 3/5. Functionally, catalyzes the conversion of L-aspartate-beta-semialdehyde (L-Asa) to L-homoserine (L-Hse), the third step in the biosynthesis of threonine and methionine from aspartate. The chain is Homoserine dehydrogenase (hom) from Synechocystis sp. (strain ATCC 27184 / PCC 6803 / Kazusa).